The chain runs to 137 residues: Thionin-like protein 1 (137 aa).

Residues 1 to 23 (MEDKRVAMLVVMMLVMGNMLIEA) form the signal peptide.

The protein belongs to the plant thionin (TC 1.C.44) family. Is disulfide-linked.

It localises to the secreted. In terms of biological role, may be involved in plant defense. The chain is Thionin-like protein 1 from Arabidopsis thaliana (Mouse-ear cress).